Here is a 692-residue protein sequence, read N- to C-terminus: ABC transporter F family member 5 (692 aa).

The interval 64–95 (EIESLFSKQPSQQDSDRKRNGKSSKNGASGIS) is disordered. Over residues 86–95 (SSKNGASGIS) the composition is skewed to polar residues. 2 consecutive ABC transporter domains span residues 98–356 (VKLE…ETQN) and 425–640 (VNVK…TKEL). ATP is bound by residues 130-137 (GVNGAGKT) and 457-464 (GPNGCGKS). The segment at 644–692 (AELEEKAPKVKAKSKMSKAEKEARKKQKMQAFQQAKQKSKASKNSKRWN) is disordered. Over residues 680-692 (QKSKASKNSKRWN) the composition is skewed to basic residues.

The protein belongs to the ABC transporter superfamily. ABCF family. EF3 (TC 3.A.1.121) subfamily.

In Arabidopsis thaliana (Mouse-ear cress), this protein is ABC transporter F family member 5 (ABCF5).